The primary structure comprises 89 residues: uncharacterized protein (89 aa).

An N-terminal signal peptide occupies residues 1-19 (MQLTKTQFVRCVFLLLANS).

This is an uncharacterized protein from Sulfolobus islandicus filamentous virus (isolate Iceland/Hveragerdi) (SIFV).